The chain runs to 241 residues: Kynurenine formamidase (241 aa).

The short motif at 23-27 is the HGGXW element; it reads HGGAW. Catalysis depends on Ser-95, which acts as the Nucleophile. Residues Asp-191 and His-223 contribute to the active site.

This sequence belongs to the kynurenine formamidase family. In terms of assembly, homodimer.

It catalyses the reaction N-formyl-L-kynurenine + H2O = L-kynurenine + formate + H(+). It functions in the pathway amino-acid degradation; L-tryptophan degradation via kynurenine pathway; L-kynurenine from L-tryptophan: step 2/2. Functionally, catalyzes the hydrolysis of N-formyl-L-kynurenine to L-kynurenine, the second step in the kynurenine pathway of tryptophan degradation. Kynurenine may be further oxidized to nicotinic acid, NAD(H) and NADP(H). Required for elimination of toxic metabolites. This Eremothecium gossypii (strain ATCC 10895 / CBS 109.51 / FGSC 9923 / NRRL Y-1056) (Yeast) protein is Kynurenine formamidase.